The following is a 61-amino-acid chain: MARKALIIKQQRPQKFSTRYYNRCKICGRPRAYLRKFGVCRLCFRKLAHNGEIPGVKKASW.

Cys-24, Cys-27, Cys-40, and Cys-43 together coordinate Zn(2+).

It belongs to the universal ribosomal protein uS14 family. Zinc-binding uS14 subfamily. As to quaternary structure, part of the 30S ribosomal subunit. Contacts proteins S3 and S10. Zn(2+) serves as cofactor.

Functionally, binds 16S rRNA, required for the assembly of 30S particles and may also be responsible for determining the conformation of the 16S rRNA at the A site. The protein is Small ribosomal subunit protein uS14 of Caldicellulosiruptor bescii (strain ATCC BAA-1888 / DSM 6725 / KCTC 15123 / Z-1320) (Anaerocellum thermophilum).